A 148-amino-acid polypeptide reads, in one-letter code: FAD synthase (148 aa).

Residues 11–12 (TF), 16–19 (HPGH), Asn94, and Tyr121 contribute to the ATP site.

It belongs to the archaeal FAD synthase family. Homodimer. The cofactor is a divalent metal cation.

It carries out the reaction FMN + ATP + H(+) = FAD + diphosphate. It functions in the pathway cofactor biosynthesis; FAD biosynthesis; FAD from FMN: step 1/1. Catalyzes the transfer of the AMP portion of ATP to flavin mononucleotide (FMN) to produce flavin adenine dinucleotide (FAD) coenzyme. This is FAD synthase from Methanoregula boonei (strain DSM 21154 / JCM 14090 / 6A8).